A 389-amino-acid polypeptide reads, in one-letter code: MGTNLSVPNPLGFFPDHQLDPAFKANSDNPDWDLNPHKDNWPDSNKVGVGAFGPGFTPPHGGLLGWSPQAQGILTTVPTAPPPASTNRQLGRKPTPLSPPLRDTHPQAMQWNSTTFHQTLQDPRVRALYFPAGGSSSGTVNPVQNTASSISSILSTTGDPVPNMENIASGLLGPLLVLQAGFFSLTKILTIPLSLDSWWTSLNFLGETPVCLGQNSQSQISSHSPTCCPPICPGYRWMCLRRFIIFLCILLLCLIFLLVLLDYQGMLPVCPLIPGSSTTSTGPCKTCTTPAQGTSMFPSCCCTKPTDGNCTCIPIPSSWAFAKYLWEWASVRFSWLSLLVPFVQWFVGLSPTVWLSVIWMMWFWGPSLYNILSPFMPLLPIFFCLWVYI.

Methionine 1 is subject to N-acetylmethionine. Residue glycine 2 is the site of N-myristoyl glycine; by host attachment. Positions 2-108 are pre-S1; sequence GTNLSVPNPL…PPLRDTHPQA (107 aa). The pre-S stretch occupies residues 2–163; sequence GTNLSVPNPL…LSTTGDPVPN (162 aa). At 2-170 the chain is on the virion surface; in external conformation side; that stretch reads GTNLSVPNPL…VPNMENIASG (169 aa). The Intravirion; in internal conformation portion of the chain corresponds to 2–242; that stretch reads GTNLSVPNPL…PGYRWMCLRR (241 aa). Residues 109–163 are pre-S2; the sequence is MQWNSTTFHQTLQDPRVRALYFPAGGSSSGTVNPVQNTASSISSILSTTGDPVPN. Residues 171-191 traverse the membrane as a helical segment; sequence LLGPLLVLQAGFFSLTKILTI. Residues 192–242 are Intravirion; in external conformation-facing; that stretch reads PLSLDSWWTSLNFLGETPVCLGQNSQSQISSHSPTCCPPICPGYRWMCLRR. A helical transmembrane segment spans residues 243–263; sequence FIIFLCILLLCLIFLLVLLDY. Residues 264–337 lie on the Virion surface side of the membrane; that stretch reads QGMLPVCPLI…WASVRFSWLS (74 aa). Asparagine 309 carries an N-linked (GlcNAc...) asparagine; by host glycan. The helical transmembrane segment at 338–358 threads the bilayer; it reads LLVPFVQWFVGLSPTVWLSVI. Residues 359–364 are Intravirion-facing; that stretch reads WMMWFW. A helical transmembrane segment spans residues 365–387; it reads GPSLYNILSPFMPLLPIFFCLWV. The Virion surface segment spans residues 388-389; that stretch reads YI.

This sequence belongs to the orthohepadnavirus major surface antigen family. Interacts (via its myristoylated pre-S1 region) with the host SLC10A1/NTCP; this interaction is essential for viral entry. In terms of assembly, in its internal form (Li-HBsAg), interacts with the capsid protein and with the isoform S. Interacts with host chaperone CANX. As to quaternary structure, associates with host chaperone CANX through its pre-S2 N glycan; this association may be essential for isoform M proper secretion. Interacts with isoform L. Interacts with the antigens of satellite virus HDV (HDVAgs); this interaction is required for encapsidation of HDV genomic RNA. In terms of processing, isoform M is N-terminally acetylated by host at a ratio of 90%, and N-glycosylated by host at the pre-S2 region. Myristoylated; this modification is essential for its interaction with the host protein SLC10A1/NTCP.

It is found in the virion membrane. Its function is as follows. The large envelope protein exists in two topological conformations, one which is termed 'external' or Le-HBsAg and the other 'internal' or Li-HBsAg. In its external conformation the protein attaches the virus to cell receptors and thereby initiating infection. This interaction determines the species specificity and liver tropism. This attachment induces virion internalization predominantly through caveolin-mediated endocytosis. The large envelope protein also assures fusion between virion membrane and endosomal membrane. In its internal conformation the protein plays a role in virion morphogenesis and mediates the contact with the nucleocapsid like a matrix protein. In terms of biological role, the middle envelope protein plays an important role in the budding of the virion. It is involved in the induction of budding in a nucleocapsid independent way. In this process the majority of envelope proteins bud to form subviral lipoprotein particles of 22 nm of diameter that do not contain a nucleocapsid. In Hepatitis B virus genotype B2 (isolate Indonesia/pIDW420/1988) (HBV-B), this protein is Large envelope protein.